Consider the following 243-residue polypeptide: Glutathione S-transferase omega-2 (243 aa).

The region spanning 22 to 101 is the GST N-terminal domain; it reads GLIRIYSMRF…YLDDAYPGRK (80 aa). Cys32 serves as the catalytic Nucleophile. Residues Lys59, Ile72, and 85–86 each bind glutathione; that span reads ES. The region spanning 106–231 is the GST C-terminal domain; the sequence is DPYERARQKM…IFQGFLNLYF (126 aa).

This sequence belongs to the GST superfamily. Omega family. In terms of tissue distribution, expressed in a range of tissues, including the liver, kidney, skeletal muscle and prostate. Strongest expression in the testis.

The enzyme catalyses RX + glutathione = an S-substituted glutathione + a halide anion + H(+). The catalysed reaction is L-dehydroascorbate + 2 glutathione = glutathione disulfide + L-ascorbate. It catalyses the reaction methylarsonate + 2 glutathione + H(+) = methylarsonous acid + glutathione disulfide + H2O. Exhibits glutathione-dependent thiol transferase activity. Has high dehydroascorbate reductase activity and may contribute to the recycling of ascorbic acid. Participates in the biotransformation of inorganic arsenic and reduces monomethylarsonic acid (MMA). In Homo sapiens (Human), this protein is Glutathione S-transferase omega-2 (GSTO2).